The sequence spans 305 residues: MHYSVLLQESINDLNINPQGIYIDATFGRGGHSKAILNRLTTGRLIAFDKDLDAISYARENFQFSNFEIVHASFASIYDYCLQHSLLGKIDGIIMDLGVSSPQLDNAARGFSFTHNGPLDMRMDVSKGITASQALEELSVYDLSYIFKVYGEERFAKKIALRIKDYIQQNGSIRTTLELAELIRATIGKKEKKNPATRCFQALRIYVNNELKDLEALLENILAVIKSGGRIAAISFHSLEDRIVKQKFSALINPKQELNRITKMLPQDSSQIKLKWITKKSKANEDELNQNVRSRSAILRVVEKL.

Residues 30 to 32, Asp-49, Phe-74, Asp-96, and Gln-103 each bind S-adenosyl-L-methionine; that span reads GGH.

This sequence belongs to the methyltransferase superfamily. RsmH family.

The protein localises to the cytoplasm. The enzyme catalyses cytidine(1402) in 16S rRNA + S-adenosyl-L-methionine = N(4)-methylcytidine(1402) in 16S rRNA + S-adenosyl-L-homocysteine + H(+). Its function is as follows. Specifically methylates the N4 position of cytidine in position 1402 (C1402) of 16S rRNA. This is Ribosomal RNA small subunit methyltransferase H from Francisella tularensis subsp. holarctica (strain LVS).